Here is a 197-residue protein sequence, read N- to C-terminus: Ras-related protein Rab-7B (197 aa).

GTP-binding positions include 14–21 (GEKSVGKT), 33–38 (VTLKPT), 57–61 (DTSGQ), 119–122 (NKID), and 152–153 (AK). The short motif at 31–39 (RFVTLKPTI) is the Effector region element. 2 S-geranylgeranyl cysteine lipidation sites follow: Cys196 and Cys197.

Belongs to the small GTPase superfamily. Rab family.

In terms of biological role, protein transport. Probably involved in vesicular traffic. The sequence is that of Ras-related protein Rab-7B (rab7B) from Dictyostelium discoideum (Social amoeba).